The following is a 301-amino-acid chain: Glycine--tRNA ligase alpha subunit (301 aa).

This sequence belongs to the class-II aminoacyl-tRNA synthetase family. As to quaternary structure, tetramer of two alpha and two beta subunits.

It is found in the cytoplasm. It catalyses the reaction tRNA(Gly) + glycine + ATP = glycyl-tRNA(Gly) + AMP + diphosphate. In Shewanella denitrificans (strain OS217 / ATCC BAA-1090 / DSM 15013), this protein is Glycine--tRNA ligase alpha subunit.